Here is a 238-residue protein sequence, read N- to C-terminus: Ribonuclease PH (238 aa).

Phosphate contacts are provided by residues arginine 86 and 124-126 (GTR).

It belongs to the RNase PH family. As to quaternary structure, homohexameric ring arranged as a trimer of dimers.

The catalysed reaction is tRNA(n+1) + phosphate = tRNA(n) + a ribonucleoside 5'-diphosphate. Phosphorolytic 3'-5' exoribonuclease that plays an important role in tRNA 3'-end maturation. Removes nucleotide residues following the 3'-CCA terminus of tRNAs; can also add nucleotides to the ends of RNA molecules by using nucleoside diphosphates as substrates, but this may not be physiologically important. Probably plays a role in initiation of 16S rRNA degradation (leading to ribosome degradation) during starvation. The protein is Ribonuclease PH of Erwinia tasmaniensis (strain DSM 17950 / CFBP 7177 / CIP 109463 / NCPPB 4357 / Et1/99).